The chain runs to 303 residues: Sulfate adenylyltransferase subunit 2 (303 aa).

Belongs to the PAPS reductase family. CysD subfamily. Heterodimer composed of CysD, the smaller subunit, and CysN.

The enzyme catalyses sulfate + ATP + H(+) = adenosine 5'-phosphosulfate + diphosphate. The protein operates within sulfur metabolism; hydrogen sulfide biosynthesis; sulfite from sulfate: step 1/3. Its function is as follows. With CysN forms the ATP sulfurylase (ATPS) that catalyzes the adenylation of sulfate producing adenosine 5'-phosphosulfate (APS) and diphosphate, the first enzymatic step in sulfur assimilation pathway. APS synthesis involves the formation of a high-energy phosphoric-sulfuric acid anhydride bond driven by GTP hydrolysis by CysN coupled to ATP hydrolysis by CysD. In Bacteroides fragilis (strain YCH46), this protein is Sulfate adenylyltransferase subunit 2.